The following is a 213-amino-acid chain: Glutathione S-transferase APIC (213 aa).

The region spanning 1–82 (MAIKVHGSPM…YIAHVYADNG (82 aa)) is the GST N-terminal domain. Glutathione-binding positions include Ser-11, 12-13 (TA), 40-41 (HK), 53-54 (QV), and 66-67 (ES). The GST C-terminal domain maps to 89–213 (DPKKMPIMSV…WVKGLEKLQK (125 aa)).

Belongs to the GST superfamily. Phi family.

It carries out the reaction RX + glutathione = an S-substituted glutathione + a halide anion + H(+). Functionally, conjugation of reduced glutathione to a wide number of exogenous and endogenous hydrophobic electrophiles. The protein is Glutathione S-transferase APIC of Nicotiana tabacum (Common tobacco).